The chain runs to 51 residues: Magnetosome protein Mms5 (51 aa).

The Lumenal portion of the chain corresponds to 1–12 (MLSAKGVSLGLG). Residues 9-16 (LGLGLGLG) are LG region. A helical membrane pass occupies residues 13 to 33 (LGLGAWGPVLLGVVGVAGAIA). Residues 34-51 (LYGYYKNRNAEPAAAEAV) lie on the Cytoplasmic side of the membrane.

It belongs to the magnetosome MamD/Mms5 family. Seen in gels as a band of about 5 kDa, with an N-terminus that corresponds to residue 8, suggesting it may undergo N-terminal cleavage.

Its subcellular location is the magnetosome membrane. In terms of biological role, might be involved in magnetite crystal growth. This chain is Magnetosome protein Mms5, found in Paramagnetospirillum magneticum (strain ATCC 700264 / AMB-1) (Magnetospirillum magneticum).